We begin with the raw amino-acid sequence, 29 residues long: Cytochrome b6-f complex subunit 8 (29 aa).

Residues 3–23 (ILTLGWVSVLTLFTYSIAMVV) form a helical membrane-spanning segment.

This sequence belongs to the PetN family. The 4 large subunits of the cytochrome b6-f complex are cytochrome b6, subunit IV (17 kDa polypeptide, PetD), cytochrome f and the Rieske protein, while the 4 small subunits are PetG, PetL, PetM and PetN. The complex functions as a dimer.

Its subcellular location is the cellular thylakoid membrane. Component of the cytochrome b6-f complex, which mediates electron transfer between photosystem II (PSII) and photosystem I (PSI), cyclic electron flow around PSI, and state transitions. The protein is Cytochrome b6-f complex subunit 8 of Acaryochloris marina (strain MBIC 11017).